A 442-amino-acid chain; its full sequence is D-serine dehydratase (442 aa).

Residue Lys-118 is modified to N6-(pyridoxal phosphate)lysine.

Belongs to the serine/threonine dehydratase family. DsdA subfamily. Monomer. Pyridoxal 5'-phosphate serves as cofactor.

It catalyses the reaction D-serine = pyruvate + NH4(+). The protein is D-serine dehydratase of Citrobacter koseri (strain ATCC BAA-895 / CDC 4225-83 / SGSC4696).